Reading from the N-terminus, the 269-residue chain is Acyl-CoA-binding domain-containing protein 4 (269 aa).

The ACB domain occupies 12 to 101; sequence CQKQFQAAVS…MKLVAQKVID (90 aa). An acyl-CoA-binding positions include 23–32, 43–47, K69, and Y88; these read IQNLPKNGSY and YSYYK. Disordered regions lie at residues 150 to 175, 195 to 226, and 248 to 269; these read GAVS…PRDL, EQRA…QCSA, and VALP…SAAN. A compositionally biased stretch (pro residues) spans 156–167; sequence PCLPKEPAPPSP. 2 positions are modified to phosphoserine: S166 and S171.

Functionally, binds medium- and long-chain acyl-CoA esters and may function as an intracellular carrier of acyl-CoA esters. This chain is Acyl-CoA-binding domain-containing protein 4 (ACBD4), found in Pongo abelii (Sumatran orangutan).